Here is a 571-residue protein sequence, read N- to C-terminus: Folylpolyglutamate synthase (571 aa).

An ATP-binding site is contributed by 122-125; it reads GKGS. S146, E215, and H243 together coordinate Mg(2+). ATP contacts are provided by R363 and D385.

The protein belongs to the folylpolyglutamate synthase family. The cofactor is a monovalent cation. In terms of tissue distribution, expressed in both shoots and roots, but expression in roots is higher compared with shoots. Distinct expression in the quiescent center (QC) region of the root tip. Also expressed in vascular tissues of the cotyledons and hypocotyls, and the first true leaves of 7 days old seedlings.

The protein resides in the plastid. The protein localises to the chloroplast. The catalysed reaction is (6S)-5,6,7,8-tetrahydrofolyl-(gamma-L-Glu)(n) + L-glutamate + ATP = (6S)-5,6,7,8-tetrahydrofolyl-(gamma-L-Glu)(n+1) + ADP + phosphate + H(+). It participates in cofactor biosynthesis; tetrahydrofolylpolyglutamate biosynthesis. Catalyzes conversion of folates to polyglutamate derivatives allowing concentration of folate compounds in the cell and the intracellular retention of these cofactors, which are important substrates for most of the folate-dependent enzymes that are involved in one-carbon transfer reactions involved in purine, pyrimidine and amino acid synthesis. Essential for organellar and whole-plant folate homeostasis. Required for postembryonic root development. Generates polyglutamylated folate cofactors to support C1 metabolism required for meristem maintenance and cell expansion during postembryonic root development. The polypeptide is Folylpolyglutamate synthase (Arabidopsis thaliana (Mouse-ear cress)).